A 157-amino-acid polypeptide reads, in one-letter code: 2-C-methyl-D-erythritol 2,4-cyclodiphosphate synthase (157 aa).

Residues aspartate 8 and histidine 10 each coordinate a divalent metal cation. 4-CDP-2-C-methyl-D-erythritol 2-phosphate is bound by residues 8–10 (DVH) and 34–35 (HS). Residue histidine 42 participates in a divalent metal cation binding. Residues 56-58 (DIG), 61-65 (FPDTD), 100-106 (AQAPKMA), 132-135 (TTTE), phenylalanine 139, and arginine 142 contribute to the 4-CDP-2-C-methyl-D-erythritol 2-phosphate site.

The protein belongs to the IspF family. In terms of assembly, homotrimer. A divalent metal cation is required as a cofactor.

It carries out the reaction 4-CDP-2-C-methyl-D-erythritol 2-phosphate = 2-C-methyl-D-erythritol 2,4-cyclic diphosphate + CMP. Its pathway is isoprenoid biosynthesis; isopentenyl diphosphate biosynthesis via DXP pathway; isopentenyl diphosphate from 1-deoxy-D-xylulose 5-phosphate: step 4/6. Involved in the biosynthesis of isopentenyl diphosphate (IPP) and dimethylallyl diphosphate (DMAPP), two major building blocks of isoprenoid compounds. Catalyzes the conversion of 4-diphosphocytidyl-2-C-methyl-D-erythritol 2-phosphate (CDP-ME2P) to 2-C-methyl-D-erythritol 2,4-cyclodiphosphate (ME-CPP) with a corresponding release of cytidine 5-monophosphate (CMP). This is 2-C-methyl-D-erythritol 2,4-cyclodiphosphate synthase from Edwardsiella ictaluri (strain 93-146).